The chain runs to 858 residues: Potassium channel KOR1 (858 aa).

The tract at residues 1–41 is disordered; that stretch reads MGRGIGSKRRVEDDDGENMPGRKKKEEEEEEEDDDGEEEYE. Over 1 to 102 the chain is Cytoplasmic; that stretch reads MGRGIGSKRR…PDNKWYRLWT (102 aa). Acidic residues predominate over residues 27–41; it reads EEEEEEDDDGEEEYE. Residues 103–123 traverse the membrane as a helical segment; sequence RFILVWAVYSSFFTPLEFGFF. Over 124 to 130 the chain is Extracellular; it reads RGLPRNL. The chain crosses the membrane as a helical span at residues 131–151; the sequence is FFLDIAGQIAFLIDIVLRFFV. The Cytoplasmic portion of the chain corresponds to 152–174; sequence AYRDPDTYRMVHNPTSIALRYCK. Residues 175-195 traverse the membrane as a helical segment; the sequence is SSFIFDLLGCFPWDAIYKACG. The Extracellular segment spans residues 196-201; it reads SKEEVR. The helical; Voltage-sensor transmembrane segment at 202-222 threads the bilayer; sequence YLLWIRLTRAMKVTEFFRSME. Over 223–236 the chain is Cytoplasmic; sequence KDIRINYLFTRIVK. The helical transmembrane segment at 237-257 threads the bilayer; the sequence is LIVVELYCTHTAACIFYYLAT. Over 258 to 292 the chain is Extracellular; that stretch reads TLPESMEGYTWIGSLQLGDYSYSHFREIDLTKRYM. Positions 293–312 form an intramembrane region, pore-forming; sequence TSLYFAIVTMATVGYGDIHA. Residues 313–316 are Extracellular-facing; sequence VNVR. Residues 317-337 traverse the membrane as a helical segment; that stretch reads EMIFIMIYVSFDMILGAYLIG. Residues 338–858 lie on the Cytoplasmic side of the membrane; that stretch reads NMTALIVKGS…GDDGGTEARQ (521 aa). 419 to 539 contributes to the a nucleoside 3',5'-cyclic phosphate binding site; that stretch reads LFKGCSAEFI…RRILSNLSES (121 aa). ANK repeat units lie at residues 559-592, 596-625, 629-658, 660-689, 693-722, and 726-756; these read KQEA…DPKN, DGRS…DIDL, FGNT…KLSL, NAGS…DPNA, DHRA…SVFA, and WGTT…ELSR. In terms of domain architecture, KHA spans 772–858; sequence RCSVFPHHPW…GDDGGTEARQ (87 aa).

It belongs to the potassium channel family. Plant (TC 1.A.1.4) subfamily.

The protein resides in the membrane. In terms of biological role, probable outward-rectifying potassium channel. This chain is Potassium channel KOR1, found in Oryza sativa subsp. japonica (Rice).